The primary structure comprises 519 residues: Lysine histidine transporter-like 8 (519 aa).

The segment at 1-44 is disordered; that stretch reads MDERPETELISIPATPRVSTPEILTPSGQRSPRPATKPSSATWT. At 1–114 the chain is on the cytoplasmic side; it reads MDERPETELI…NLNAGVGFQA (114 aa). 2 helical membrane-spanning segments follow: residues 115–135 and 136–156; these read LVLPVAFAFLGWSWGILSLTI and AYCWQLYTLWILVQLHEAVPG. Over 157–176 the chain is Cytoplasmic; that stretch reads KRYNRYVELAQAAFGERLGV. A helical transmembrane segment spans residues 177–197; sequence WLALFPTVYLSAGTATALILI. At 198–217 the chain is on the extracellular side; that stretch reads GGETMKLFFQIVCGPLCTSN. Residues 218 to 238 traverse the membrane as a helical segment; it reads PLTTVEWYLVFTSLCIVLSQL. Over 239–243 the chain is Cytoplasmic; the sequence is PNLNS. A helical membrane pass occupies residues 244-264; the sequence is IAGLSLIGAVTAITYSTMVWV. At 265–282 the chain is on the extracellular side; the sequence is LSVSQPRPATISYEPLSM. A helical membrane pass occupies residues 283 to 303; sequence PSTSGSLFAVLNALGIIAFAF. Residues 304–333 are Cytoplasmic-facing; the sequence is RGHNLVLEIQSTMPSTFKHPAHVPMWRGAK. Residues 334 to 354 traverse the membrane as a helical segment; the sequence is ISYFLIALCIFPISIGGFWAY. The Extracellular portion of the chain corresponds to 355–377; the sequence is GNLMPSGGMLAALYAFHIHDIPR. Residues 378 to 398 form a helical membrane-spanning segment; the sequence is GLLATAFLLVVFSCLSSFQIY. Residues 399 to 427 are Cytoplasmic-facing; the sequence is SMPAFDSFEAGYTSRTNKPCSIWVRSGFR. The helical transmembrane segment at 428-448 threads the bilayer; sequence VFFGFVSFFIGVALPFLSSLA. Gly-449 is a topological domain (extracellular). A helical transmembrane segment spans residues 450 to 470; sequence LLGGLTLPVTFAYPCFMWVLI. The Cytoplasmic segment spans residues 471–485; the sequence is KKPAKYSFNWYFHWG. The chain crosses the membrane as a helical span at residues 486-506; sequence LGWLGVAFSLAFSIGGIWSMV. The Extracellular portion of the chain corresponds to 507 to 519; it reads TNGLKLKFFKPPN.

Belongs to the amino acid/polyamine transporter 2 family. Amino acid/auxin permease (AAAP) (TC 2.A.18.2) subfamily.

It localises to the cell membrane. Amino acid transporter. In Arabidopsis thaliana (Mouse-ear cress), this protein is Lysine histidine transporter-like 8 (AATL1).